The chain runs to 26 residues: Photosystem II stability/assembly factor HCF136, chloroplastic (26 aa).

The protein belongs to the Ycf48 family.

The protein localises to the plastid. The protein resides in the chloroplast thylakoid lumen. In terms of biological role, essential for photosystem II (PSII) biogenesis; required for assembly of an early intermediate in PSII assembly that includes D2 (psbD) and cytochrome b559. In Populus euphratica (Euphrates poplar), this protein is Photosystem II stability/assembly factor HCF136, chloroplastic.